We begin with the raw amino-acid sequence, 363 residues long: Large ribosomal subunit protein uL4B (363 aa).

The interval P280–N363 is C-terminal-extended nuclear localization signal.

This sequence belongs to the universal ribosomal protein uL4 family. In terms of assembly, component of the large ribosomal subunit (LSU). Mature yeast ribosomes consist of a small (40S) and a large (60S) subunit. The 40S small subunit contains 1 molecule of ribosomal RNA (18S rRNA) and at least 33 different proteins. The large 60S subunit contains 3 rRNA molecules (25S, 5.8S and 5S rRNA) and at least 46 different proteins. uL4 is associated with the polypeptide exit tunnel. uL4 interacts with its chaperone ACL4 and the nuclear import receptor KAP104.

It localises to the cytoplasm. In terms of biological role, component of the ribosome, a large ribonucleoprotein complex responsible for the synthesis of proteins in the cell. The small ribosomal subunit (SSU) binds messenger RNAs (mRNAs) and translates the encoded message by selecting cognate aminoacyl-transfer RNA (tRNA) molecules. The large subunit (LSU) contains the ribosomal catalytic site termed the peptidyl transferase center (PTC), which catalyzes the formation of peptide bonds, thereby polymerizing the amino acids delivered by tRNAs into a polypeptide chain. The nascent polypeptides leave the ribosome through a tunnel in the LSU and interact with protein factors that function in enzymatic processing, targeting, and the membrane insertion of nascent chains at the exit of the ribosomal tunnel. This chain is Large ribosomal subunit protein uL4B (rpl401), found in Schizosaccharomyces pombe (strain 972 / ATCC 24843) (Fission yeast).